A 156-amino-acid chain; its full sequence is Ribosome maturation factor RimP (156 aa).

The protein belongs to the RimP family.

It is found in the cytoplasm. In terms of biological role, required for maturation of 30S ribosomal subunits. The polypeptide is Ribosome maturation factor RimP (Bacillus mycoides (strain KBAB4) (Bacillus weihenstephanensis)).